The sequence spans 428 residues: NADH-ubiquinone oxidoreductase chain 2 (428 aa).

14 helical membrane-spanning segments follow: residues 22-42, 59-79, 84-104, 108-128, 140-160, 185-205, 218-238, 241-261, 269-289, 292-312, 332-352, 356-376, 384-404, and 408-428; these read IAFLSLLGYFVIMLNIWLHFG, LDESILSALLFILFLGLVIMN, LGWEFHLLLMGGLTGAIYMLT, LLLMVVGFEFLNLSTYLILSL, LLSSAFYTTLLLLAISFFYGL, ILLLGTIAFKLGLVPAHLWVP, WMGSVPKAAVLLWLPTIYPLL, LAPFLLVLSALSFLLSAVLMA, FLAYSAIGHLGFVVAAFAIGD, AYGYYIFIYMIATLAQFVLLS, LGLGFLVIVLTMASLPPFAGF, LLVLFGFLEIGYGIFAVLLIL, YYLKWIQTTFFSVVPFASAPI, and YPNLVSFLVTLILPSTLLLLL.

This sequence belongs to the complex I subunit 2 family.

It localises to the mitochondrion inner membrane. It carries out the reaction a ubiquinone + NADH + 5 H(+)(in) = a ubiquinol + NAD(+) + 4 H(+)(out). Functionally, core subunit of the mitochondrial membrane respiratory chain NADH dehydrogenase (Complex I) that is believed to belong to the minimal assembly required for catalysis. Complex I functions in the transfer of electrons from NADH to the respiratory chain. The immediate electron acceptor for the enzyme is believed to be ubiquinone. The sequence is that of NADH-ubiquinone oxidoreductase chain 2 from Hyaloraphidium curvatum (Lower fungus).